A 318-amino-acid chain; its full sequence is Apo-salmochelin esterase (318 aa).

A helical membrane pass occupies residues 13 to 32 (KAIFFHLSCLTLICSAQVYA). Catalysis depends on residues Ser189 and His287.

It belongs to the esterase D family. In terms of assembly, monomer.

The protein localises to the cell inner membrane. It catalyses the reaction enterobactin + H2O = N-(2,3-dihydroxybenzoyl)-L-serine trimer. The catalysed reaction is monoglucosyl-enterobactin + H2O = [N-(2,3-dihydroxybenzoyl)-L-seryl]2-N-(C-5-[deoxy-beta-D-glucosyl]-2,3-dihydroxybenzoyl)-L-serine + H(+). The enzyme catalyses diglucosyl-enterobactin + H2O = N-(2,3-dihydroxybenzoyl)-L-seryl-[N-(C-5-[deoxy-beta-D-glucosyl]-2,3-dihydroxybenzoyl)-L-serine]2 + H(+). It carries out the reaction triglucosyl-enterobactin + H2O = [N-(C-5-[deoxy-beta-D-glucosyl]-2,3-dihydroxybenzoyl)-L-serine]3 + H(+). Catalyzes the hydrolysis of both the apo and Fe3(+)-bound forms of enterobactin (Ent), monoglucosyl-C-Ent (MGE), diglucosyl-C-Ent (DGE) and triglucosyl-C-Ent (TGE). It prefers apo siderophores as substrates and hydrolyzes the Fe3(+)-bound siderophores very inefficiently. Tends to hydrolyze the trilactone just once to produce linearized trimers. May hydrolyze and linearize some or all of apo enterobactins while they are being exported. The protein is Apo-salmochelin esterase of Escherichia coli O6:H1 (strain CFT073 / ATCC 700928 / UPEC).